Consider the following 134-residue polypeptide: Cytochrome c-type biogenesis protein CcmE (134 aa).

Residues 1 to 7 (MKRKYRR) are Cytoplasmic-facing. A helical; Signal-anchor for type II membrane protein transmembrane segment spans residues 8–28 (LFVVIITLSIFAGSVVLVLGK). Residues 29–134 (LKNNVSFFYT…MPNKYKTNDL (106 aa)) are Periplasmic-facing. Residues His-120 and Tyr-124 each coordinate heme.

It belongs to the CcmE/CycJ family.

The protein localises to the cell inner membrane. Heme chaperone required for the biogenesis of c-type cytochromes. Transiently binds heme delivered by CcmC and transfers the heme to apo-cytochromes in a process facilitated by CcmF and CcmH. In Ehrlichia ruminantium (strain Welgevonden), this protein is Cytochrome c-type biogenesis protein CcmE.